A 238-amino-acid chain; its full sequence is NAD(P)H-quinone oxidoreductase subunit K 1 (238 aa).

[4Fe-4S] cluster-binding residues include C54, C55, C119, and C150.

Belongs to the complex I 20 kDa subunit family. NDH-1 can be composed of about 15 different subunits; different subcomplexes with different compositions have been identified which probably have different functions. [4Fe-4S] cluster is required as a cofactor.

It is found in the cellular thylakoid membrane. The catalysed reaction is a plastoquinone + NADH + (n+1) H(+)(in) = a plastoquinol + NAD(+) + n H(+)(out). It carries out the reaction a plastoquinone + NADPH + (n+1) H(+)(in) = a plastoquinol + NADP(+) + n H(+)(out). In terms of biological role, NDH-1 shuttles electrons from an unknown electron donor, via FMN and iron-sulfur (Fe-S) centers, to quinones in the respiratory and/or the photosynthetic chain. The immediate electron acceptor for the enzyme in this species is believed to be plastoquinone. Couples the redox reaction to proton translocation, and thus conserves the redox energy in a proton gradient. Cyanobacterial NDH-1 also plays a role in inorganic carbon-concentration. The chain is NAD(P)H-quinone oxidoreductase subunit K 1 from Cyanothece sp. (strain PCC 7425 / ATCC 29141).